Consider the following 645-residue polypeptide: ATP-dependent zinc metalloprotease FtsH (645 aa).

Topologically, residues 1-6 (MDQRPK) are cytoplasmic. A helical transmembrane segment spans residues 7–27 (FGMILFYIVLGVFLMVALRGL). Topologically, residues 28–110 (YTTDTNLSVP…VVYEKGNDSL (83 aa)) are periplasmic. Residues 111–131 (FWVNLLGTIIPLAIIVFIWFF) form a helical membrane-spanning segment. The Cytoplasmic segment spans residues 132-645 (AMRSLSGRNS…AKEGNEDEKN (514 aa)). 204–211 (GPPGTGKT) contributes to the ATP binding site. Residue His-426 coordinates Zn(2+). Glu-427 is an active-site residue. Zn(2+)-binding residues include His-430 and Asp-503. The tract at residues 623–645 (SKRKVSAVSTNEEAKEGNEDEKN) is disordered. Over residues 634–645 (EEAKEGNEDEKN) the composition is skewed to basic and acidic residues.

In the central section; belongs to the AAA ATPase family. The protein in the C-terminal section; belongs to the peptidase M41 family. In terms of assembly, homohexamer. Zn(2+) serves as cofactor.

The protein resides in the cell inner membrane. Its function is as follows. Acts as a processive, ATP-dependent zinc metallopeptidase for both cytoplasmic and membrane proteins. Plays a role in the quality control of integral membrane proteins. The chain is ATP-dependent zinc metalloprotease FtsH from Kosmotoga olearia (strain ATCC BAA-1733 / DSM 21960 / TBF 19.5.1).